The sequence spans 292 residues: Ribosomal protein L11 methyltransferase (292 aa).

Thr138, Gly159, Asp181, and Asn225 together coordinate S-adenosyl-L-methionine.

It belongs to the methyltransferase superfamily. PrmA family.

Its subcellular location is the cytoplasm. It catalyses the reaction L-lysyl-[protein] + 3 S-adenosyl-L-methionine = N(6),N(6),N(6)-trimethyl-L-lysyl-[protein] + 3 S-adenosyl-L-homocysteine + 3 H(+). Its function is as follows. Methylates ribosomal protein L11. This is Ribosomal protein L11 methyltransferase from Leuconostoc citreum (strain KM20).